Reading from the N-terminus, the 464-residue chain is tRNA-2-methylthio-N(6)-dimethylallyladenosine synthase (464 aa).

Positions 19 to 135 (GSYWITTFGC…LENLLERVDL (117 aa)) constitute an MTTase N-terminal domain. Residues Cys-28, Cys-64, Cys-98, Cys-170, Cys-174, and Cys-177 each contribute to the [4Fe-4S] cluster site. A Radical SAM core domain is found at 156–393 (RDSSICGWVN…NELVETTSRK (238 aa)). Residues 396–464 (QRYLNNIESV…SFSLSGQIYK (69 aa)) form the TRAM domain.

This sequence belongs to the methylthiotransferase family. MiaB subfamily. In terms of assembly, monomer. [4Fe-4S] cluster is required as a cofactor.

The protein localises to the cytoplasm. The catalysed reaction is N(6)-dimethylallyladenosine(37) in tRNA + (sulfur carrier)-SH + AH2 + 2 S-adenosyl-L-methionine = 2-methylsulfanyl-N(6)-dimethylallyladenosine(37) in tRNA + (sulfur carrier)-H + 5'-deoxyadenosine + L-methionine + A + S-adenosyl-L-homocysteine + 2 H(+). Catalyzes the methylthiolation of N6-(dimethylallyl)adenosine (i(6)A), leading to the formation of 2-methylthio-N6-(dimethylallyl)adenosine (ms(2)i(6)A) at position 37 in tRNAs that read codons beginning with uridine. This chain is tRNA-2-methylthio-N(6)-dimethylallyladenosine synthase, found in Prochlorococcus marinus subsp. pastoris (strain CCMP1986 / NIES-2087 / MED4).